We begin with the raw amino-acid sequence, 260 residues long: Triosephosphate isomerase (260 aa).

11 to 13 (NWK) contributes to the substrate binding site. The active-site Electrophile is His-103. The active-site Proton acceptor is Glu-175. Residues Gly-181, Ser-220, and 241–242 (GG) contribute to the substrate site.

It belongs to the triosephosphate isomerase family. In terms of assembly, homodimer.

The protein localises to the cytoplasm. The catalysed reaction is D-glyceraldehyde 3-phosphate = dihydroxyacetone phosphate. It participates in carbohydrate biosynthesis; gluconeogenesis. The protein operates within carbohydrate degradation; glycolysis; D-glyceraldehyde 3-phosphate from glycerone phosphate: step 1/1. Functionally, involved in the gluconeogenesis. Catalyzes stereospecifically the conversion of dihydroxyacetone phosphate (DHAP) to D-glyceraldehyde-3-phosphate (G3P). The chain is Triosephosphate isomerase from Shewanella woodyi (strain ATCC 51908 / MS32).